The primary structure comprises 579 residues: MKKLFLFFTLIFTAFAANSGLFDKKQTFLKVDDAFAFSATLSTDKSQLQAHWDIADGYYLYQDKISAELVGKSNPLSLHTQQAAELHQDPYFGEVKVFTHSIDGIFRGTFNNADDKVEITYQGCTEGFCYPPETKVLRIGDLAVSQEQIVEKTVEKNTALLSEQDRLADGLFHSKWTIFGFFLLGLGLAFTPCVLPMLPLLSAIVIGQQQRPNMMRAFSLAFLYVQGMALTYTLLGLAVAAIGLPFQIALQHPYVMIGLSILFVALALSMFGLFTIQLPNSLQNKLNTWSQKQTSGAFGGAFAMGMIAGLVASPCTSAPLSGALLYVAQSGDLFTGAATLYLLALGMGVPLMLITLFGNKILPKSGEWMNTVKQTFGFVMLALPVFLLSRILPEVWEPRLWAGLATVFFIWFALQMSKNGFGYAIKIISFALAMVTVQPLQNWIWQTQTTTQSAVENMPVSQVKFKQIKNTEELDRTLAENPHSIAMLDLYADWCVACKEFEKLTFSDPQVQQQFQNILLLQVNMTKNSPENKALMERFNVMGLPTILFFDQQNNEIQGSRVTGFMDADAFSNWLKALH.

A signal peptide spans 1–16 (MKKLFLFFTLIFTAFA). 2 disulfide bridges follow: Cys-124–Cys-129 and Cys-193–Cys-315. Helical transmembrane passes span 178–198 (IFGF…LPML), 230–250 (LTYT…QIAL), 254–274 (YVMI…FGLF), 296–316 (GAFG…SPCT), 337–357 (AATL…ITLF), 376–396 (FGFV…PEVW), 397–417 (EPRL…LQMS), and 420–440 (GFGY…VQPL). Residues 449–579 (TTTQSAVENM…AFSNWLKALH (131 aa)) enclose the Thioredoxin domain. An intrachain disulfide couples Cys-495 to Cys-498.

It belongs to the thioredoxin family. DsbD subfamily.

The protein localises to the cell inner membrane. It catalyses the reaction [protein]-dithiol + NAD(+) = [protein]-disulfide + NADH + H(+). The enzyme catalyses [protein]-dithiol + NADP(+) = [protein]-disulfide + NADPH + H(+). Its function is as follows. Required to facilitate the formation of correct disulfide bonds in some periplasmic proteins and for the assembly of the periplasmic c-type cytochromes. Acts by transferring electrons from cytoplasmic thioredoxin to the periplasm. This transfer involves a cascade of disulfide bond formation and reduction steps. The protein is Thiol:disulfide interchange protein DsbD of Haemophilus influenzae (strain 86-028NP).